The following is a 753-amino-acid chain: 5-methyltetrahydropteroyltriglutamate--homocysteine methyltransferase (753 aa).

5-methyltetrahydropteroyltri-L-glutamate contacts are provided by residues 17-20 and Lys-117; that span reads RELK. Residues 431–433 and Glu-484 each bind L-homocysteine; that span reads IGS. L-methionine is bound by residues 431–433 and Glu-484; that span reads IGS. 5-methyltetrahydropteroyltri-L-glutamate is bound by residues 515 to 516 and Trp-561; that span reads RC. Position 599 (Asp-599) interacts with L-homocysteine. Asp-599 serves as a coordination point for L-methionine. 5-methyltetrahydropteroyltri-L-glutamate is bound at residue Glu-605. Zn(2+)-binding residues include His-641, Cys-643, and Glu-665. Catalysis depends on His-694, which acts as the Proton donor. Cys-726 is a Zn(2+) binding site.

The protein belongs to the vitamin-B12 independent methionine synthase family. Zn(2+) is required as a cofactor.

The catalysed reaction is 5-methyltetrahydropteroyltri-L-glutamate + L-homocysteine = tetrahydropteroyltri-L-glutamate + L-methionine. The protein operates within amino-acid biosynthesis; L-methionine biosynthesis via de novo pathway; L-methionine from L-homocysteine (MetE route): step 1/1. Its function is as follows. Catalyzes the transfer of a methyl group from 5-methyltetrahydrofolate to homocysteine resulting in methionine formation. The sequence is that of 5-methyltetrahydropteroyltriglutamate--homocysteine methyltransferase from Escherichia coli O157:H7 (strain EC4115 / EHEC).